The sequence spans 199 residues: 5'-deoxynucleotidase YfbR (199 aa).

Substrate-binding positions include 18 to 19 (RW) and histidine 33. Residues 30 to 142 (VSEHSLQVAM…VKQADALCAY (113 aa)) form the HD domain. Residues histidine 33, histidine 68, and aspartate 69 each contribute to the a divalent metal cation site. Substrate contacts are provided by residues aspartate 69, 77–80 (DLPT), and aspartate 137. Aspartate 137 is an a divalent metal cation binding site.

Belongs to the 5DNU family. In terms of assembly, homodimer. A divalent metal cation is required as a cofactor.

The protein localises to the cytoplasm. The enzyme catalyses a 2'-deoxyribonucleoside 5'-phosphate + H2O = a 2'-deoxyribonucleoside + phosphate. Its function is as follows. Catalyzes the strictly specific dephosphorylation of 2'-deoxyribonucleoside 5'-monophosphates. The protein is 5'-deoxynucleotidase YfbR of Salmonella arizonae (strain ATCC BAA-731 / CDC346-86 / RSK2980).